We begin with the raw amino-acid sequence, 163 residues long: Ribosome maturation factor RimP (163 aa).

It belongs to the RimP family.

The protein resides in the cytoplasm. Its function is as follows. Required for maturation of 30S ribosomal subunits. The protein is Ribosome maturation factor RimP of Polynucleobacter asymbioticus (strain DSM 18221 / CIP 109841 / QLW-P1DMWA-1) (Polynucleobacter necessarius subsp. asymbioticus).